The following is a 777-amino-acid chain: Double zinc ribbon and ankyrin repeat-containing protein 1 (777 aa).

Over residues 161-176 (QVGERTDPKTLKDLRF) the composition is skewed to basic and acidic residues. Positions 161–202 (QVGERTDPKTLKDLRFSESPLEIPAHSGGSGSRPPTRQSQSP) are disordered. Residues 193–202 (RPPTRQSQSP) are compositionally biased toward polar residues. Ser-201 is subject to Phosphoserine. 2 DZANK-type zinc fingers span residues 230 to 289 (CAHC…CVVC) and 358 to 406 (CSRC…GSCG). ANK repeat units follow at residues 442–473 (NIPL…LLAK) and 477–506 (EIAS…GYWR).

As to quaternary structure, interacts with NINL. Associates with DYNC1H1 and multiple dynein intermediate and light chains as well as actin-binding proteins.

It is found in the cytoplasm. Its subcellular location is the cytoskeleton. The protein resides in the microtubule organizing center. It localises to the centrosome. The protein localises to the cilium basal body. Involved in vesicle transport in photoreceptor cells. The sequence is that of Double zinc ribbon and ankyrin repeat-containing protein 1 (DZANK1) from Macaca fascicularis (Crab-eating macaque).